We begin with the raw amino-acid sequence, 300 residues long: DNA packaging protein OPG160 (300 aa).

It belongs to the orthopoxvirus OPG160 protein family. As to quaternary structure, interacts with protein OPG137.

In terms of biological role, participates in viral DNA packaging and virion morphogenesis. In Monkeypox virus, this protein is DNA packaging protein OPG160 (OPG160).